A 447-amino-acid polypeptide reads, in one-letter code: Signal recognition particle protein (447 aa).

Residues 108 to 115 (GLQGSGKT), 190 to 194 (DTAGR), and 248 to 251 (TKLD) contribute to the GTP site.

This sequence belongs to the GTP-binding SRP family. SRP54 subfamily. As to quaternary structure, part of the signal recognition particle protein translocation system, which is composed of SRP and FtsY. Interacts with RNA.

Its subcellular location is the cytoplasm. It carries out the reaction GTP + H2O = GDP + phosphate + H(+). Functionally, involved in targeting and insertion of nascent membrane proteins into the cytoplasmic membrane. Binds to the hydrophobic signal sequence of the ribosome-nascent chain (RNC) as it emerges from the ribosomes. The SRP-RNC complex is then targeted to the cytoplasmic membrane where it interacts with the SRP receptor FtsY. The chain is Signal recognition particle protein from Mycoplasma mycoides.